Reading from the N-terminus, the 277-residue chain is Large ribosomal subunit protein uL2 (277 aa).

A disordered region spans residues 216–277 (RRPHNRGVAM…IIRRRKVGKG (62 aa)).

Belongs to the universal ribosomal protein uL2 family. As to quaternary structure, part of the 50S ribosomal subunit. Forms a bridge to the 30S subunit in the 70S ribosome.

In terms of biological role, one of the primary rRNA binding proteins. Required for association of the 30S and 50S subunits to form the 70S ribosome, for tRNA binding and peptide bond formation. It has been suggested to have peptidyltransferase activity; this is somewhat controversial. Makes several contacts with the 16S rRNA in the 70S ribosome. The protein is Large ribosomal subunit protein uL2 of Acidiphilium cryptum (strain JF-5).